The sequence spans 78 residues: Small ribosomal subunit protein uS15c (78 aa).

It belongs to the universal ribosomal protein uS15 family. Part of the 30S ribosomal subunit.

It is found in the plastid. The protein resides in the chloroplast. This is Small ribosomal subunit protein uS15c (rps15-A) from Saccharum officinarum (Sugarcane).